Here is a 305-residue protein sequence, read N- to C-terminus: Deoxyribonuclease gamma (305 aa).

Residues 1-20 (MSRELAPLLLLLLSIHSALA) form the signal peptide. A Bipartite nuclear localization signal motif is present at residues 35–51 (KQEDKNAMDVIVKVIKR). Catalysis depends on residues glutamate 100 and histidine 155. Cysteine 194 and cysteine 231 form a disulfide bridge. A not required for free DNA-nuclease activity but required for activity towards liposome-coated DNA region spans residues 284–305 (SRAFTNSKKSVTLRKKTKSKRS). The Nuclear localization signal signature appears at 296-304 (LRKKTKSKR).

It belongs to the DNase I family. It depends on Ca(2+) as a cofactor. The cofactor is Mg(2+). In terms of processing, poly-ADP-ribosylated by PARP1. ADP-ribosylation negatively regulates enzymatic activity during apoptosis. In terms of tissue distribution, liver and spleen.

The protein resides in the nucleus. The protein localises to the endoplasmic reticulum. Its subcellular location is the secreted. Its activity is regulated as follows. Inhibited by zinc. Functionally, has DNA hydrolytic activity. Is capable of both single- and double-stranded DNA cleavage, producing DNA fragments with 3'-OH ends. Can cleave chromatin to nucleosomal units and cleaves nucleosomal and liposome-coated DNA. Acts in internucleosomal DNA fragmentation (INDF) during apoptosis and necrosis. The role in apoptosis includes myogenic and neuronal differentiation, and BCR-mediated clonal deletion of self-reactive B cells. Is active on chromatin in apoptotic cell-derived membrane-coated microparticles and thus suppresses anti-DNA autoimmunity. Together with DNASE1, plays a key role in degrading neutrophil extracellular traps (NETs). NETs are mainly composed of DNA fibers and are released by neutrophils to bind pathogens during inflammation. Degradation of intravascular NETs by DNASE1 and DNASE1L3 is required to prevent formation of clots that obstruct blood vessels and cause organ damage following inflammation. The chain is Deoxyribonuclease gamma from Homo sapiens (Human).